An 86-amino-acid chain; its full sequence is Large ribosomal subunit protein bL27 (86 aa).

The disordered stretch occupies residues 1 to 24 (MATKKAGGSSRNGRDSAGRRLGVK).

This sequence belongs to the bacterial ribosomal protein bL27 family.

The sequence is that of Large ribosomal subunit protein bL27 from Rickettsia conorii (strain ATCC VR-613 / Malish 7).